Here is a 496-residue protein sequence, read N- to C-terminus: Glutelin type-A 3 (496 aa).

Residues Met1 to Ala24 form the signal peptide. 2 disulfide bridges follow: Cys45-Cys78 and Cys121-Cys312. 2 consecutive Cupin type-1 domains span residues Leu50–Arg248 and Gln318–Arg467.

Belongs to the 11S seed storage protein (globulins) family. As to quaternary structure, hexamer; each subunit is composed of an acidic and a basic chain derived from a single precursor and linked by a disulfide bond.

In terms of biological role, seed storage protein. In Oryza sativa subsp. japonica (Rice), this protein is Glutelin type-A 3 (GLUA3).